A 428-amino-acid chain; its full sequence is Putative zinc metalloprotease SAS1196 (428 aa).

A Zn(2+)-binding site is contributed by histidine 21. Glutamate 22 is an active-site residue. Histidine 25 contacts Zn(2+). Transmembrane regions (helical) follow at residues 172-194 (FLTL…IGLA), 309-331 (GSTL…GFSF), 352-374 (IISL…LIPI), and 401-420 (TTII…LVTW). The 84-residue stretch at 186-269 (ALVLFIGLAY…TKSVELTPKK (84 aa)) folds into the PDZ domain.

This sequence belongs to the peptidase M50B family. Zn(2+) serves as cofactor.

The protein resides in the cell membrane. The polypeptide is Putative zinc metalloprotease SAS1196 (Staphylococcus aureus (strain MSSA476)).